Consider the following 129-residue polypeptide: DNA-directed RNA polymerase subunit omega (129 aa).

Residues 76 to 100 (EVDEPEPEAVPMIASGDSSGGEDSD) form a disordered region.

This sequence belongs to the RNA polymerase subunit omega family. As to quaternary structure, the RNAP catalytic core consists of 2 alpha, 1 beta, 1 beta' and 1 omega subunit. When a sigma factor is associated with the core the holoenzyme is formed, which can initiate transcription.

It carries out the reaction RNA(n) + a ribonucleoside 5'-triphosphate = RNA(n+1) + diphosphate. Promotes RNA polymerase assembly. Latches the N- and C-terminal regions of the beta' subunit thereby facilitating its interaction with the beta and alpha subunits. This is DNA-directed RNA polymerase subunit omega from Xanthobacter autotrophicus (strain ATCC BAA-1158 / Py2).